Consider the following 940-residue polypeptide: Reticulon-3 (940 aa).

Positions 1-24 (MAESSAATQSPSVSSSSSGAEPST) are enriched in low complexity. Disordered regions lie at residues 1 to 32 (MAES…GGSP), 71 to 91 (SSEI…LGSH), and 129 to 182 (DIPC…ALDL). N-acetylalanine is present on A2. Residues 2–771 (AESSAATQSP…KKTGFVFGTT (770 aa)) are Cytoplasmic-facing. Position 31 is a phosphoserine (S31). A phosphoserine mark is found at S196, S204, S209, S212, S249, and S282. Disordered regions lie at residues 314–335 (AKQQ…RSEH), 381–405 (KGYL…ISGS), and 428–512 (EVTE…LEGQ). Acidic residues predominate over residues 430–447 (TEVDSSGESDDTVIEDTT). A compositionally biased stretch (basic and acidic residues) spans 472 to 490 (TSERENKETTSHETVRSEM). Over residues 491–512 (YENSEQQQAHAETPTQRSLEGQ) the composition is skewed to polar residues. S508 bears the Phosphoserine mark. A Phosphothreonine modification is found at T572. Phosphoserine is present on residues S575, S576, and S652. Disordered stretches follow at residues 623-655 (NKLS…SSDL) and 672-701 (QVQA…SDIL). The span at 689–699 (DPQSGPQNSSD) shows a compositional bias: polar residues. The Reticulon domain occupies 752–940 (VHDLIFWRDV…LPGIAKKKAE (189 aa)). An intramembrane region (helical) is located at residues 772 to 795 (LIMLLSLAAFSVISVVSYLILALL). The Cytoplasmic portion of the chain corresponds to 796 to 852 (SVTISFRVYKSVIQAVQKSEEGHPFKAYLDVDITLSSEAFHSYMNAAMVHVNKALKL). Positions 853-875 (IIRLFLVEDLVDSLKLAVFMWLM) form an intramembrane region, helical. The Cytoplasmic segment spans residues 876 to 879 (TYVG). The helical intramembrane region spans 880–902 (AVFNGITLLILAELLVFSVPIVY). Residues 895–940 (VFSVPIVYEKYKTQIDHYVGIARDQTKSIVEKIQAKLPGIAKKKAE) form an interaction with FADD region. The Cytoplasmic segment spans residues 903–940 (EKYKTQIDHYVGIARDQTKSIVEKIQAKLPGIAKKKAE). Positions 908–910 (QID) are interaction with BACE1.

Homodimer. Interacts with RTN4. Isoform 2 interacts with BACE1, BACE2, BCL2 and FADD. Interacts with ATL2. Interacts with TMEM33. Interacts with ATL1. Interacts with ZFYVE27 and with KIF5A in a ZFYVE27-dependent manner. Interacts with RIGI. Interacts with TRIM25. In terms of tissue distribution, present in olfactory bulb, olfactory epithelium and retina (at protein level).

The protein localises to the endoplasmic reticulum membrane. It localises to the golgi apparatus membrane. In terms of biological role, may be involved in membrane trafficking in the early secretory pathway. Inhibits BACE1 activity and amyloid precursor protein processing. May induce caspase-8 cascade and apoptosis. May favor BCL2 translocation to the mitochondria upon endoplasmic reticulum stress. Induces the formation of endoplasmic reticulum tubules. Acts also as an inflammation-resolving regulator by interacting with both TRIM25 and RIGI, subsequently impairing RIGI 'Lys-63'-linked polyubiquitination leading to IRF3 and NF-kappa-B inhibition. The sequence is that of Reticulon-3 (Rtn3) from Rattus norvegicus (Rat).